Reading from the N-terminus, the 648-residue chain is Pumilio homolog 3 (648 aa).

The disordered stretch occupies residues 1-124 (MEVKGKKQFT…KKKKELKQSR (124 aa)). Residues 17–27 (AQEKNRFHKNS) are compositionally biased toward basic and acidic residues. At lysine 33 the chain carries N6-acetyllysine. Residues 60–69 (LGKKGVKQFK) are compositionally biased toward basic residues. A compositionally biased stretch (basic and acidic residues) spans 94-124 (FQPDGRSDESAAKKPKWDDFKKKKKELKQSR). The short motif at 106-118 (KKPKWDDFKKKKK) is the Nuclear localization signal element. The 368-residue stretch at 143–510 (EILRRKDCDK…VVLDKSACVL (368 aa)) folds into the PUM-HD domain. Pumilio repeat units follow at residues 177 to 212 (HDSTRVIQCYIQYGNEEQRKQAFEELRDDLVELSKA), 213 to 248 (KYSRNIVKKFLMYGSKPQIAEIIRSFKGHVRKMLRH), 249 to 277 (AEASAIVEYAYNDKAILEQRNMLTEELYG), 289 to 325 (RTLDKVLEVQPEKLELIMDEMKQILTPMAQKEAVIKH), 326 to 361 (SLVHKVFLDFFTYAPPKLRSEMIEAIREAVVYLAHT), 362 to 397 (HDGARVAMHCLWHGTPKDRKVIVKTMKTYVEKVANG), 398 to 435 (QYSHLVLLAAFDCIDDTKLVKQIIISEIISSLPSIVND), 436 to 504 (KYGR…VVLD), 505 to 551 (KSAC…IAEH), 552 to 596 (PAGH…WASV), and 597 to 636 (NRGAIILSSLLQSCDLEVANKVKAALKSLIPTLEKTKSTS). The interval 289–297 (RTLDKVLEV) is HA-8.

In terms of assembly, interacts with PARP1 (via catalytic domain). In terms of tissue distribution, widely expressed.

It localises to the nucleus. Its subcellular location is the nucleolus. The protein resides in the nucleoplasm. The protein localises to the chromosome. In terms of biological role, inhibits the poly(ADP-ribosyl)ation activity of PARP1 and the degradation of PARP1 by CASP3 following genotoxic stress. Binds to double-stranded RNA or DNA without sequence specificity. Involved in development of the eye and of primordial germ cells. The sequence is that of Pumilio homolog 3 from Homo sapiens (Human).